The sequence spans 337 residues: 1,4-dihydroxy-2-naphthoyl-CoA synthase, peroxisomal (337 aa).

Substrate contacts are provided by residues 97–98 (RR), Lys-133, 137–141 (SGGDQ), 181–185 (YAVGG), Thr-207, and Ser-213. 206-208 (QTG) contributes to the hydrogencarbonate binding site.

Belongs to the enoyl-CoA hydratase/isomerase family. MenB subfamily. Homohexamer. The cofactor is hydrogencarbonate.

It is found in the peroxisome. It catalyses the reaction 2-succinylbenzoyl-CoA + H(+) = 1,4-dihydroxy-2-naphthoyl-CoA + H2O. Its function is as follows. Involved in the biosynthesis of phylloquinone (vitamin K1). Converts o-succinylbenzoyl-CoA (OSB-CoA) to 1,4-dihydroxy-2-naphthoyl-CoA (DHNA-CoA). The polypeptide is 1,4-dihydroxy-2-naphthoyl-CoA synthase, peroxisomal (MENB) (Arabidopsis thaliana (Mouse-ear cress)).